Reading from the N-terminus, the 761-residue chain is Prolyl endopeptidase FAP (761 aa).

The Cytoplasmic portion of the chain corresponds to 1-4; sequence MKTW. The helical; Signal-anchor for type II membrane protein transmembrane segment at 5–25 threads the bilayer; sequence LKTVFGVTTLAALALVVICIV. The Extracellular portion of the chain corresponds to 26–761; that stretch reads LRPSRVYKPE…FLKQCFSLSD (736 aa). N-linked (GlcNAc...) asparagine glycosylation is found at N49, N92, and N99. 2 residues coordinate substrate: E203 and E204. N-linked (GlcNAc...) asparagine glycosylation is found at N227 and N314. Disulfide bonds link C321–C332, C438–C441, and C448–C466. Catalysis depends on S624, which acts as the Charge relay system. A disulfide bond links C643 and C756. N-linked (GlcNAc...) asparagine glycosylation is present at N679. Active-site charge relay system residues include D702 and H734.

This sequence belongs to the peptidase S9B family. As to quaternary structure, homodimer; homodimerization is required for activity of both plasma membrane and soluble forms. The monomer is inactive. Heterodimer with DPP4. Interacts with PLAUR; the interaction occurs at the cell surface of invadopodia membranes. Interacts with ITGB1. Interacts with ITGA3. Associates with integrin alpha-3/beta-1; the association occurs in a collagen-dependent manner at the cell surface of invadopodia membranes. Post-translationally, N-glycosylated. In terms of processing, the N-terminus may be blocked. In terms of tissue distribution, expressed strongly in uterus, pancreas, submaxillary gland and skin, less in lymph node, ovary, skeletal muscle, adrenal and bone marrow. Expressed in reactive stromal fibroblast in epithelial cancers. Expressed in melanocytes but not melanomas (at protein level). Detected in fibroblasts, in placenta, uterus, embryos from day 7-19 and in newborn mice (P1).

It localises to the cell surface. The protein localises to the cell membrane. Its subcellular location is the cell projection. It is found in the lamellipodium membrane. The protein resides in the invadopodium membrane. It localises to the ruffle membrane. The protein localises to the membrane. Its subcellular location is the secreted. The enzyme catalyses Hydrolysis of Pro-|-Xaa &gt;&gt; Ala-|-Xaa in oligopeptides.. It catalyses the reaction Release of an N-terminal dipeptide, Xaa-Yaa-|-Zaa-, from a polypeptide, preferentially when Yaa is Pro, provided Zaa is neither Pro nor hydroxyproline.. Gelatinase activity is inhibited by serine-protease inhibitors, such as phenylmethylsulfonyl fluoride (PMSF), 4-(2-aminoethyl)-benzenesulfonyl fluoride hydrochloride (AEBSF), 4-amidino phenylsulfonyl fluoride (APSF) and diisopropyl fluorophosphate (DFP), N-ethylmaleimide (NEM) and phenylmethylsulfonyl fluoride (PMSF). Dipeptidyl peptidase activity is inhibited by 2,2'-azino-bis(3-ethylbenzthiazoline-6-sulfonic acid), diisopropylfluorophosphate (DFP). Prolyl endopeptidase activity is inhibited by the boronic acid peptide Ac-Gly-BoroPro, Ac-Gly-Pro-chloromethyl ketone and Thr-Ser-Gly-chloromethyl ketone. Functionally, cell surface glycoprotein serine protease that participates in extracellular matrix degradation and involved in many cellular processes including tissue remodeling, fibrosis, wound healing, inflammation and tumor growth. Both plasma membrane and soluble forms exhibit post-proline cleaving endopeptidase activity, with a marked preference for Ala/Ser-Gly-Pro-Ser/Asn/Ala consensus sequences, on substrate such as alpha-2-antiplasmin SERPINF2 and SPRY2. Degrade also gelatin, heat-denatured type I collagen, but not native collagen type I and IV, vibronectin, tenascin, laminin, fibronectin, fibrin or casein. Also has dipeptidyl peptidase activity, exhibiting the ability to hydrolyze the prolyl bond two residues from the N-terminus of synthetic dipeptide substrates provided that the penultimate residue is proline, with a preference for Ala-Pro, Ile-Pro, Gly-Pro, Arg-Pro and Pro-Pro. Natural neuropeptide hormones for dipeptidyl peptidase are the neuropeptide Y (NPY), peptide YY (PYY), substance P (TAC1) and brain natriuretic peptide 32 (NPPB). The plasma membrane form, in association with either DPP4, PLAUR or integrins, is involved in the pericellular proteolysis of the extracellular matrix (ECM), and hence promotes cell adhesion, migration and invasion through the ECM. Plays a role in tissue remodeling during development and wound healing. Participates in the cell invasiveness towards the ECM in malignant melanoma cancers. Enhances tumor growth progression by increasing angiogenesis, collagen fiber degradation and apoptosis and by reducing antitumor response of the immune system. Promotes glioma cell invasion through the brain parenchyma by degrading the proteoglycan brevican. Acts as a tumor suppressor in melanocytic cells through regulation of cell proliferation and survival in a serine protease activity-independent manner. In Mus musculus (Mouse), this protein is Prolyl endopeptidase FAP.